The primary structure comprises 1188 residues: MEYNEYEPEPQYVEDDDDEEITQEDAWAVISAYFEEKGLVRQQLDSFDEFIQNTMQEIVDESADIEIRPESQHNPGHQSDFAETIYKISFGQIYLSKPMMTESDGETATLFPKAARLRNLTYSAPLYVDVTKRVIKKGHDGEEVTETQDFTKVFIGKVPIMLRSSYCTLFQNSEKDLTELGECPYDQGGYFIINGSEKVLIAQEKMSTNHVYVFKKRQPNKYAYVGEVRSMAENQNRPPSTMFVRMLARASAKGGSSGQYIRCTLPYIRTEIPIIIVFRALGFVADKDILEHICYDFADTQMMELLRPSLEEAFVIQNQLVALDYIGKRGATVGVTKEKRIKYARDILQKEMLPHVGIGEHCETKKAYYFGYIIHRLLLCALGRRPEDDRDHYGNKRLDLAGPLLGGLFRMLFRKLTRDVRSYVQKCVDNGKEVNLQFAIKAKTITSGLKYSLATGNWGQANAAGTRAGVSQVLNRLTYASTLSHLRRLNSPIGREGKLAKPRQLHNSQWGMMCPAETPEGQACGLVKNLALMVYITVGSAAYPILEFLEEWGTENFEEISPSVIPQATKIFVNGMWVGVHRDPDMLVKTLRRLRRRVDVNTEVGVVRDIRLKELRIYTDYGRCSRPLFIVDNQKLLIKKRDIYALQQRESAEEDGWHHLVAKGFIEYIDTEEEETTMISMTISDLVQARLRPEEAYTENYTHCEIHPSLILGVCASIIPFPDHNQSPRNTYQSAMGKQAMGIYVTNYQFRMDTLAYVLYYPQKPLVTTRAMEHLHFRQLPAGINAIVAISCYSGYNQEDSVIMNQSSIDRGFFRSLFFRSYRDEEKKMGTLVKEDFGRPDRGSTMGMRHGSYDKLDDDGLAPPGTRVSGEDVIIGKTTPISQDEAQGQSSRYTRRDHSISLRHSETGMVDQVLLTTNADGLRFVKVRVRSVRIPQIGDKFSSRHGQKGTVGMTYTQEDMPWTIEGVTPDIIVNPHAIPSRMTIGQLIECIMGKVAAHMGKEGDATPFTDVTVDNISKALHKCGYQMRGFERMYNGHTGRPLTAMIFLGPTYYQRLKHMVDDKIHSRGRGPVQILTRQPAEGRSRDGGLRFGEMERDCMIAHGAAHFLKERLFDQSDAYRVHVCEVCGLIAIANLKKNSFECRGCKNKTDIVQVYIPYACKLLFQELMSMAIAPRMLTKHLKSAKGRQ.

D800 contacts Mg(2+). Disordered regions lie at residues 852-871 (SYDK…VSGE) and 877-897 (KTTP…TRRD). The segment covering 879 to 892 (TPISQDEAQGQSSR) has biased composition (polar residues). C1124, C1127, C1142, and C1145 together coordinate Zn(2+). A C4-type zinc finger spans residues 1124 to 1145 (CEVCGLIAIANLKKNSFECRGC).

This sequence belongs to the RNA polymerase beta chain family. Component of the RNA polymerase II complex consisting of at least 12 subunits.

Its subcellular location is the nucleus. It carries out the reaction RNA(n) + a ribonucleoside 5'-triphosphate = RNA(n+1) + diphosphate. DNA-dependent RNA polymerase catalyzes the transcription of DNA into RNA using the four ribonucleoside triphosphates as substrates. Second largest component of RNA polymerase II which synthesizes mRNA precursors and many functional non-coding RNAs. Proposed to contribute to the polymerase catalytic activity and forms the polymerase active center together with the largest subunit. Pol II is the central component of the basal RNA polymerase II transcription machinery. It is composed of mobile elements that move relative to each other. NRPB2 is part of the core element with the central large cleft, the clamp element that moves to open and close the cleft and the jaws that are thought to grab the incoming DNA template. Functionally, essential for the completion of the three rounds of mitosis in female megaspores required for the development of mature gametophytes. In Arabidopsis thaliana (Mouse-ear cress), this protein is DNA-directed RNA polymerase II subunit 2 (NRPB2).